The sequence spans 883 residues: Valine--tRNA ligase (883 aa).

Positions 46-56 match the 'HIGH' region motif; the sequence is PNVTGKLHLGH. A 'KMSKS' region motif is present at residues 520-524; that stretch reads KMSKS. Residue lysine 523 coordinates ATP. Residues 809–844 are a coiled coil; sequence LADLLNVEEELARLEKELAKWQKELDMVGKKLSNER.

Belongs to the class-I aminoacyl-tRNA synthetase family. ValS type 1 subfamily. As to quaternary structure, monomer.

Its subcellular location is the cytoplasm. It carries out the reaction tRNA(Val) + L-valine + ATP = L-valyl-tRNA(Val) + AMP + diphosphate. Catalyzes the attachment of valine to tRNA(Val). As ValRS can inadvertently accommodate and process structurally similar amino acids such as threonine, to avoid such errors, it has a 'posttransfer' editing activity that hydrolyzes mischarged Thr-tRNA(Val) in a tRNA-dependent manner. The polypeptide is Valine--tRNA ligase (Streptococcus agalactiae serotype V (strain ATCC BAA-611 / 2603 V/R)).